Here is a 592-residue protein sequence, read N- to C-terminus: LIM domain-binding protein 1 (592 aa).

Disordered regions lie at residues 14-41 (GHPPPFAGPESSNSHYGMPPSQGTNSQN) and 305-368 (PAPE…NPMT). A compositionally biased stretch (polar residues) spans 23-41 (ESSNSHYGMPPSQGTNSQN). Over residues 322–344 (PAANPRGSKKATAAAAAAAAAAT) the composition is skewed to low complexity. Positions 352–368 (PTASPANNQQFPPNPMT) are enriched in polar residues. In terms of domain architecture, LIM interaction domain (LID) spans 378-417 (DVMVVGEPSMMGSEFGENDERTISRVENSQYDPNAMQMQS). Disordered stretches follow at residues 437-458 (HHPGMQPPPGQQHMPPHSMGSQ) and 559-592 (GGMQMNQMPPPNYSQYTGGPPPQWPPPNSAMITG). Positions 577-586 (GPPPQWPPPN) are enriched in pro residues.

It belongs to the LDB family. In terms of assembly, interacts with blmp-1. As to expression, expressed in all neurons and some other tissues of the adult, including vulval muscle, and, in males, all the neurons of the tail region. Expressed in vulval cells.

In terms of biological role, binds to the LIM domain of LIM domain-containing transcription factors. Required for the blmp-1-mediated transcriptional activation or repression of several hypodermal genes, such as bed-3. Regulates sam-10 nuclear localization in PLM neurons. Has a role in synaptic differentiation of PLM mechanosensory neurons. Involved in gonadogenesis. The sequence is that of LIM domain-binding protein 1 from Caenorhabditis elegans.